A 950-amino-acid chain; its full sequence is Protocadherin alpha-6 (950 aa).

The signal sequence occupies residues 1–29 (MVFTPEDRLGKQCLLLPLLLLAAWKVGSG). Residues 30–697 (QLHYSVPEEA…GPEAALVDVN (668 aa)) lie on the Extracellular side of the membrane. Cadherin domains follow at residues 34–133 (SVPE…PPLF), 157–242 (ASDA…APTF), 243–350 (EQSE…VPEI), 351–455 (ALTS…APAF), 456–565 (AQPE…APAL), and 581–678 (VPRS…APKA). Residues Asn-257, Asn-265, Asn-386, and Asn-548 are each glycosylated (N-linked (GlcNAc...) asparagine). A helical membrane pass occupies residues 698 to 718 (VYLIIAICAVSSLLVLTLLLY). Residues 719-950 (TALRCSAPPT…GNSTTDNSDQ (232 aa)) lie on the Cytoplasmic side of the membrane. 4 PXXP repeats span residues 799–802 (PRQP), 832–835 (PGGP), 873–876 (PGNP), and 891–894 (PGSP). Positions 799 to 894 (PRQPNPDWRY…PDKFIIPGSP (96 aa)) are 4 X 4 AA repeats of P-X-X-P. The disordered stretch occupies residues 830–950 (AGPGGPDQQW…GNSTTDNSDQ (121 aa)). Basic and acidic residues predominate over residues 909 to 923 (DKSDFITFGKKEETK).

Its subcellular location is the cell membrane. It localises to the secreted. Functionally, potential calcium-dependent cell-adhesion protein. May be involved in the establishment and maintenance of specific neuronal connections in the brain. This is Protocadherin alpha-6 (PCDHA6) from Homo sapiens (Human).